A 125-amino-acid polypeptide reads, in one-letter code: Protein ApaG (125 aa).

The ApaG domain occupies 1 to 125; the sequence is MINAPRVCVQ…FRLAIPSLIH (125 aa).

This chain is Protein ApaG, found in Pectobacterium carotovorum subsp. carotovorum (strain PC1).